We begin with the raw amino-acid sequence, 112 residues long: Large ribosomal subunit protein eL33w (112 aa).

The protein belongs to the eukaryotic ribosomal protein eL33 family.

This is Large ribosomal subunit protein eL33w (RPL35AA) from Arabidopsis thaliana (Mouse-ear cress).